The sequence spans 161 residues: MKLNELRDNPGARPKSKRLGRGIGSGKGKTSGKGVKGQKAREGVSLNGFEGGQLPIYRRLPKRGFNNVNRKDYAPLNVGTLAALIESGKIDAGQKITEATLRAAGVYAGSKLAGVRLLGRGEISQKVEIEVSGASASAIAAIEQAGGSVTTTVARAEPASA.

A compositionally biased stretch (basic and acidic residues) spans 1–10 (MKLNELRDNP). Positions 1–42 (MKLNELRDNPGARPKSKRLGRGIGSGKGKTSGKGVKGQKARE) are disordered. Residues 21 to 35 (RGIGSGKGKTSGKGV) show a composition bias toward gly residues.

This sequence belongs to the universal ribosomal protein uL15 family. Part of the 50S ribosomal subunit.

Functionally, binds to the 23S rRNA. The sequence is that of Large ribosomal subunit protein uL15 from Acidiphilium cryptum (strain JF-5).